Consider the following 130-residue polypeptide: Chaperone protein SycT (130 aa).

In terms of assembly, binds to YopT.

Functions as a specific chaperone for YopT. This chain is Chaperone protein SycT (sycT), found in Yersinia enterocolitica.